Consider the following 332-residue polypeptide: 2,3-bisphosphoglycerate-dependent phosphoglycerate mutase 2 (332 aa).

The N-terminal 48 residues, 1-48 (MATSTTMSHQAIGSVVSQRPFKASQFLKEPLNNVPMKFRQKRFKIEAT), are a transit peptide targeting the chloroplast. Substrate contacts are provided by residues 85–92 (RHGESLWN), 98–99 (TG), Arg135, 189–192 (ERMY), Lys200, 216–217 (RR), and 260–261 (GN). Residue His86 is the Tele-phosphohistidine intermediate of the active site. Glu189 acts as the Proton donor/acceptor in catalysis.

Belongs to the phosphoglycerate mutase family. BPG-dependent PGAM subfamily.

The protein localises to the plastid. The protein resides in the chloroplast. It carries out the reaction (2R)-2-phosphoglycerate = (2R)-3-phosphoglycerate. Its pathway is carbohydrate degradation; glycolysis; pyruvate from D-glyceraldehyde 3-phosphate: step 3/5. Functionally, catalyzes the interconversion of 2-phosphoglycerate and 3-phosphoglycerate. The polypeptide is 2,3-bisphosphoglycerate-dependent phosphoglycerate mutase 2 (Arabidopsis thaliana (Mouse-ear cress)).